The chain runs to 467 residues: Glutamate--tRNA ligase (467 aa).

The 'HIGH' region signature appears at 13–23 (PSPTGYLHVGG). Residues 245-249 (KLSKR) carry the 'KMSKS' region motif. K248 is a binding site for ATP.

Belongs to the class-I aminoacyl-tRNA synthetase family. Glutamate--tRNA ligase type 1 subfamily. In terms of assembly, monomer.

Its subcellular location is the cytoplasm. The catalysed reaction is tRNA(Glu) + L-glutamate + ATP = L-glutamyl-tRNA(Glu) + AMP + diphosphate. In terms of biological role, catalyzes the attachment of glutamate to tRNA(Glu) in a two-step reaction: glutamate is first activated by ATP to form Glu-AMP and then transferred to the acceptor end of tRNA(Glu). In Herminiimonas arsenicoxydans, this protein is Glutamate--tRNA ligase.